The primary structure comprises 877 residues: Translation initiation factor IF-2 (877 aa).

The disordered stretch occupies residues 48-289 (SSFQNSAPAE…QITKRKERPL (242 aa)). Basic and acidic residues predominate over residues 78–89 (RKNEKKPEENNT). Over residues 92-101 (KSNRRRNNKR) the composition is skewed to basic residues. Positions 102-116 (RSSDRARDNKERDAK) are enriched in basic and acidic residues. Residues 123–132 (KAAALLQQFK) are compositionally biased toward low complexity. Basic and acidic residues-rich tracts occupy residues 135–155 (QRAE…EYHE) and 162–189 (KEQS…EKKV). Residues 277–286 (PRKQITKRKE) show a composition bias toward basic residues. A tr-type G domain is found at 378–547 (KRPPVVTIMG…LLQADVMELK (170 aa)). Positions 387–394 (GHVDHGKT) are G1. Position 387-394 (387-394 (GHVDHGKT)) interacts with GTP. The G2 stretch occupies residues 412–416 (GITQR). Residues 433-436 (DTPG) are G3. GTP is bound by residues 433-437 (DTPGH) and 487-490 (NKMD). Residues 487–490 (NKMD) are G4. The interval 523–525 (SAK) is G5.

Belongs to the TRAFAC class translation factor GTPase superfamily. Classic translation factor GTPase family. IF-2 subfamily.

It localises to the cytoplasm. Functionally, one of the essential components for the initiation of protein synthesis. Protects formylmethionyl-tRNA from spontaneous hydrolysis and promotes its binding to the 30S ribosomal subunits. Also involved in the hydrolysis of GTP during the formation of the 70S ribosomal complex. The sequence is that of Translation initiation factor IF-2 from Lactobacillus acidophilus (strain ATCC 700396 / NCK56 / N2 / NCFM).